A 336-amino-acid polypeptide reads, in one-letter code: dTDP-glucose 4,6-dehydratase (336 aa).

NAD(+) contacts are provided by residues 7 to 13, 37 to 40, and 63 to 64; these read GGAGFIG, DKLT, and DI. Residue threonine 87 coordinates substrate. Threonine 102 lines the NAD(+) pocket. 127–129 lines the substrate pocket; it reads TDE. The active-site Proton donor is the aspartate 128. Active-site proton acceptor residues include glutamate 129 and tyrosine 151. Residue 151–155 participates in NAD(+) binding; that stretch reads YAAAK. Asparagine 180 provides a ligand contact to substrate. Position 181 (asparagine 181) interacts with NAD(+). Substrate contacts are provided by residues 190–191, 206–208, arginine 215, asparagine 250, and 274–277; these read KL, PVY, and RPGH.

Belongs to the NAD(P)-dependent epimerase/dehydratase family. dTDP-glucose dehydratase subfamily. In terms of assembly, homodimer. The cofactor is NAD(+).

It carries out the reaction dTDP-alpha-D-glucose = dTDP-4-dehydro-6-deoxy-alpha-D-glucose + H2O. The protein operates within antibiotic biosynthesis; novobiocin biosynthesis. In terms of biological role, dTDP-glucose 4,6-dehydratase involved in the generation of the deoxysugar in the novobiocin biosynthesis pathway, an aminocoumarin family antibiotic that targets bacterial DNA gyrases. The polypeptide is dTDP-glucose 4,6-dehydratase (novT) (Streptomyces niveus (Streptomyces spheroides)).